Consider the following 1453-residue polypeptide: Clustered mitochondria protein homolog (1453 aa).

Residues 78–101 show a composition bias toward polar residues; the sequence is LSENGQENSPHNSDSGHETSSPDS. Residues 78 to 110 form a disordered region; sequence LSENGQENSPHNSDSGHETSSPDSPLTPIEEGA. Residues 439–690 form the Clu domain; the sequence is EDGIRAEDCT…RTFPPDVNYL (252 aa). Positions 979 to 1015 are disordered; it reads PLTPSNEEVSMPINSVKKSRSSKRRKQISSGGKENDD. Residues 995 to 1005 are compositionally biased toward basic residues; the sequence is KKSRSSKRRKQ. 2 TPR repeats span residues 1235–1268 and 1277–1310; these read AEID…HQIY and ALIY…YSKT.

The protein belongs to the CLU family.

It is found in the cytoplasm. Functionally, mRNA-binding protein involved in proper cytoplasmic distribution of mitochondria. The protein is Clustered mitochondria protein homolog of Brugia malayi (Filarial nematode worm).